Here is a 953-residue protein sequence, read N- to C-terminus: Vacuolar membrane protease (953 aa).

Over 1–16 (MDQTKPPRRNPLAFTP) the chain is Cytoplasmic. The chain crosses the membrane as a helical span at residues 17–37 (WPVTLITAVVYLAFVIPLLVI). Residues 38 to 382 (HHVVPSAPTS…TFVLFRLHTL (345 aa)) lie on the Vacuolar side of the membrane. Residues Asn53 and Asn115 are each glycosylated (N-linked (GlcNAc...) asparagine). 2 residues coordinate Zn(2+): His165 and Asp177. Glu211 acts as the Proton acceptor in catalysis. 3 residues coordinate Zn(2+): Glu212, Glu237, and His310. Residues 383-403 (FALSVTLLVVAPIVLLLTSII) traverse the membrane as a helical segment. At 404-437 (LTKVDKMYLFRTSIRPEGSLEVLPLYGDRGVIRY) the chain is on the cytoplasmic side. The chain crosses the membrane as a helical span at residues 438–458 (PFLLGIPTAVTIGLAYLLTKF). The Vacuolar portion of the chain corresponds to 459–464 (NPYIVH). The helical transmembrane segment at 465-485 (SSQYAVWSMMVSVWIFLAWFV) threads the bilayer. The Cytoplasmic portion of the chain corresponds to 486-499 (SRVADFARPSAFHR). A helical membrane pass occupies residues 500-520 (VYTLTWTFVVMWVLQVIATVY). Topologically, residues 521–524 (QDRW) are vacuolar. The chain crosses the membrane as a helical span at residues 525–545 (ALGGSYFIFFAYAGTFLATWI). Topologically, residues 546–650 (SYLELFALPR…SLPKWLWLLQ (105 aa)) are cytoplasmic. The disordered stretch occupies residues 570 to 599 (ASSHSSRRGLSEEDEEDEDEAPTESTSLLG). The span at 581 to 591 (EEDEEDEDEAP) shows a compositional bias: acidic residues. The helical transmembrane segment at 651-671 (FLLAAPIVLILVGPIALLLTG) threads the bilayer. The Vacuolar portion of the chain corresponds to 672-684 (SLHQTGQDGSSSL). The helical transmembrane segment at 685–705 (FIYIAIVALTTLLLSPMLPFV) threads the bilayer. The Cytoplasmic portion of the chain corresponds to 706-711 (HRCTYH). The helical transmembrane segment at 712 to 732 (IPLFMLAVFAGTLIYNLVAFP) threads the bilayer. At 733 to 953 (FSDSNRLKLF…VEGRKSFEIA (221 aa)) the chain is on the vacuolar side. Residue Asn779 is glycosylated (N-linked (GlcNAc...) asparagine).

It belongs to the peptidase M28 family. Zn(2+) serves as cofactor.

Its subcellular location is the vacuole membrane. Functionally, may be involved in vacuolar sorting and osmoregulation. In Emericella nidulans (strain FGSC A4 / ATCC 38163 / CBS 112.46 / NRRL 194 / M139) (Aspergillus nidulans), this protein is Vacuolar membrane protease.